The following is a 139-amino-acid chain: MILGIGSDLIDIRRVAKVIERHGDRFLDRVFTPAERAKAQRRAANEKMVVATYAKRFAAKEACAKALGTGIRHGVWWRDMGVVNLPGGRPTMQLTGGAKARLESMTPPGHEARIDLSITDDWPLAQAFVIISADPPGRP.

Mg(2+) contacts are provided by Asp8 and Glu61.

Belongs to the P-Pant transferase superfamily. AcpS family. Mg(2+) serves as cofactor.

It localises to the cytoplasm. The enzyme catalyses apo-[ACP] + CoA = holo-[ACP] + adenosine 3',5'-bisphosphate + H(+). Functionally, transfers the 4'-phosphopantetheine moiety from coenzyme A to a Ser of acyl-carrier-protein. The protein is Holo-[acyl-carrier-protein] synthase of Rhodopseudomonas palustris (strain BisA53).